The chain runs to 396 residues: Lipid-A-disaccharide synthase (396 aa).

This sequence belongs to the LpxB family.

The catalysed reaction is a lipid X + a UDP-2-N,3-O-bis[(3R)-3-hydroxyacyl]-alpha-D-glucosamine = a lipid A disaccharide + UDP + H(+). The protein operates within bacterial outer membrane biogenesis; LPS lipid A biosynthesis. Condensation of UDP-2,3-diacylglucosamine and 2,3-diacylglucosamine-1-phosphate to form lipid A disaccharide, a precursor of lipid A, a phosphorylated glycolipid that anchors the lipopolysaccharide to the outer membrane of the cell. This chain is Lipid-A-disaccharide synthase, found in Nitrobacter hamburgensis (strain DSM 10229 / NCIMB 13809 / X14).